Here is a 278-residue protein sequence, read N- to C-terminus: Large ribosomal subunit protein uL2 (278 aa).

Disordered regions lie at residues 1-58 and 210-278; these read MGIR…GGGH and GRMR…GKKR. A compositionally biased stretch (basic and acidic residues) spans 23 to 33; the sequence is EVTRSEPEKSL. Over residues 40–49 the composition is skewed to low complexity; sequence SGGRNSTGRI. Composition is skewed to basic residues over residues 210–220 and 269–278; these read GRMRWKGKRPS and VRRRRTGKKR.

It belongs to the universal ribosomal protein uL2 family. As to quaternary structure, part of the 50S ribosomal subunit. Forms a bridge to the 30S subunit in the 70S ribosome.

One of the primary rRNA binding proteins. Required for association of the 30S and 50S subunits to form the 70S ribosome, for tRNA binding and peptide bond formation. It has been suggested to have peptidyltransferase activity; this is somewhat controversial. Makes several contacts with the 16S rRNA in the 70S ribosome. This Beutenbergia cavernae (strain ATCC BAA-8 / DSM 12333 / CCUG 43141 / JCM 11478 / NBRC 16432 / NCIMB 13614 / HKI 0122) protein is Large ribosomal subunit protein uL2.